The chain runs to 224 residues: MEQYKQEFIEFMVESNVLTFGDFITKSGRRTPFFINTGNYKTGNQLNKLAKFYAKAIYDNFGDDFDILFGPAYKGIPLSVSVAMALDNIYGINAAYCSNRKEVKDHGDKGILLGAKLEEGDRVIIVEDVTTAGTSVYETMPILKSQAEVDVKGIIISVDRMERGKGDKSALTELKEKFGFKTCSIVTMEEVVEYLYKKNINGKVIIDDKMKDRINEYYKEYGVK.

Residues K26, 73–74 (YK), R100, K101, K104, H106, and 127–135 (EDVTTAGTS) each bind 5-phospho-alpha-D-ribose 1-diphosphate. 2 residues coordinate orotate: T131 and R160.

This sequence belongs to the purine/pyrimidine phosphoribosyltransferase family. PyrE subfamily. In terms of assembly, homodimer. Mg(2+) is required as a cofactor.

It catalyses the reaction orotidine 5'-phosphate + diphosphate = orotate + 5-phospho-alpha-D-ribose 1-diphosphate. The protein operates within pyrimidine metabolism; UMP biosynthesis via de novo pathway; UMP from orotate: step 1/2. Catalyzes the transfer of a ribosyl phosphate group from 5-phosphoribose 1-diphosphate to orotate, leading to the formation of orotidine monophosphate (OMP). The chain is Orotate phosphoribosyltransferase from Clostridium acetobutylicum (strain ATCC 824 / DSM 792 / JCM 1419 / IAM 19013 / LMG 5710 / NBRC 13948 / NRRL B-527 / VKM B-1787 / 2291 / W).